Reading from the N-terminus, the 653-residue chain is Threonine--tRNA ligase (653 aa).

The TGS domain maps to 1-61 (MIKITFPDGN…NEDAEVKLFK (61 aa)). The interval 243-542 (DHRKIGKELE…LIEHTAGKFP (300 aa)) is catalytic. 3 residues coordinate Zn(2+): C338, H389, and H519.

Belongs to the class-II aminoacyl-tRNA synthetase family. Homodimer. Zn(2+) is required as a cofactor.

It localises to the cytoplasm. The enzyme catalyses tRNA(Thr) + L-threonine + ATP = L-threonyl-tRNA(Thr) + AMP + diphosphate + H(+). In terms of biological role, catalyzes the attachment of threonine to tRNA(Thr) in a two-step reaction: L-threonine is first activated by ATP to form Thr-AMP and then transferred to the acceptor end of tRNA(Thr). Also edits incorrectly charged L-seryl-tRNA(Thr). This Porphyromonas gingivalis (strain ATCC 33277 / DSM 20709 / CIP 103683 / JCM 12257 / NCTC 11834 / 2561) protein is Threonine--tRNA ligase.